Here is a 170-residue protein sequence, read N- to C-terminus: MPIKTIKIMVEGGNVKPGPPLAPTLSQLGLNVGEVVKKLNEATSSFKGMSVPVTIEVDSSTKKYEIKVGIPTTTALLLKEAGASEPSGDPAHKKIGNLSLEQVIKIAIMKKPGLTTKSLKAALKSMLGTAKSIGLTVDNRDPKELVKEVEEGKYDDLLAKYENEWNGVKE.

It belongs to the universal ribosomal protein uL11 family. As to quaternary structure, part of the ribosomal stalk of the 50S ribosomal subunit. Interacts with L10 and the large rRNA to form the base of the stalk. L10 forms an elongated spine to which L12 dimers bind in a sequential fashion forming a multimeric L10(L12)X complex.

In terms of biological role, forms part of the ribosomal stalk which helps the ribosome interact with GTP-bound translation factors. In Saccharolobus solfataricus (strain ATCC 35092 / DSM 1617 / JCM 11322 / P2) (Sulfolobus solfataricus), this protein is Large ribosomal subunit protein uL11.